We begin with the raw amino-acid sequence, 546 residues long: Chaperonin GroEL (546 aa).

Residues 29 to 32, Lys-50, 86 to 90, Gly-414, and Asp-492 contribute to the ATP site; these read TMGP and DGTTT.

It belongs to the chaperonin (HSP60) family. Forms a cylinder of 14 subunits composed of two heptameric rings stacked back-to-back. Interacts with the co-chaperonin GroES.

The protein resides in the cytoplasm. The enzyme catalyses ATP + H2O + a folded polypeptide = ADP + phosphate + an unfolded polypeptide.. In terms of biological role, together with its co-chaperonin GroES, plays an essential role in assisting protein folding. The GroEL-GroES system forms a nano-cage that allows encapsulation of the non-native substrate proteins and provides a physical environment optimized to promote and accelerate protein folding. The sequence is that of Chaperonin GroEL from Helicobacter pylori (strain HPAG1).